Here is a 689-residue protein sequence, read N- to C-terminus: Elongation factor G (689 aa).

Residues Ala-9–Leu-283 enclose the tr-type G domain. GTP is bound by residues Ala-18–Thr-25, Asp-82–His-86, and Asn-136–Asp-139.

The protein belongs to the TRAFAC class translation factor GTPase superfamily. Classic translation factor GTPase family. EF-G/EF-2 subfamily.

Its subcellular location is the cytoplasm. Functionally, catalyzes the GTP-dependent ribosomal translocation step during translation elongation. During this step, the ribosome changes from the pre-translocational (PRE) to the post-translocational (POST) state as the newly formed A-site-bound peptidyl-tRNA and P-site-bound deacylated tRNA move to the P and E sites, respectively. Catalyzes the coordinated movement of the two tRNA molecules, the mRNA and conformational changes in the ribosome. This is Elongation factor G from Clostridium botulinum (strain ATCC 19397 / Type A).